The following is a 779-amino-acid chain: Transcription factor SPT20 homolog (779 aa).

S296 bears the Phosphoserine mark. Disordered stretches follow at residues 373 to 392 (DEES…DHSN) and 420 to 507 (PVKM…IPRK). Positions 424–437 (SHSSSGSASLSQVS) are enriched in low complexity. Over residues 445–454 (TETVSVQSSV) the composition is skewed to polar residues. Residues 470 to 479 (SSSGNSSSGN) are compositionally biased toward low complexity. Phosphothreonine is present on T494. Residues S519 and S524 each carry the phosphoserine modification. Disordered stretches follow at residues 641–677 (QLSQ…EQAL) and 755–779 (LHHH…TPKF). Positions 755-771 (LHHHRHTGSQSKSKMKR) are enriched in basic residues.

This sequence belongs to the SPT20 family. Interacts with MAPK14. Interacts with ATG9A. Highly expressed in testis, moderately in brain and pituitary gland. Expressed in several fetal tissues, including lung, brain, thymus and kidney. Expression is down-regulated in malignant prostate tissues.

Its subcellular location is the nucleus. In terms of biological role, required for MAP kinase p38 (MAPK11, MAPK12, MAPK13 and/or MAPK14) activation during gastrulation. Required for down-regulation of E-cadherin during gastrulation by regulating E-cadherin protein level downstream from NCK-interacting kinase (NIK) and independently of the regulation of transcription by FGF signaling and Snail. Required for starvation-induced ATG9A trafficking during autophagy. The chain is Transcription factor SPT20 homolog (SUPT20H) from Homo sapiens (Human).